The following is a 40-amino-acid chain: Thioredoxin (40 aa).

Cysteine 29 and cysteine 32 are oxidised to a cystine.

Belongs to the thioredoxin family.

Participates in various redox reactions through the reversible oxidation of its active center dithiol to a disulfide and catalyzes dithiol-disulfide exchange reactions. The sequence is that of Thioredoxin (trxA) from Clostridium sporogenes.